Reading from the N-terminus, the 737-residue chain is Polyribonucleotide nucleotidyltransferase (737 aa).

The Mg(2+) site is built by Asp489 and Asp495. The region spanning 556–615 (PKIDTIKIDVDKIKIVIGKGGETIDKIIAETGVKIDIDEEGNVSIYSSDQDAINRAKEII) is the KH domain. Residues 625-693 (DEVYRAKVVR…EKGRIDASMK (69 aa)) form the S1 motif domain. A disordered region spans residues 691–737 (SMKALLPRPPKPEHDEKGEKSERPHRPRHHKDHKPKKEFTETPKDSE). The span at 700 to 714 (PKPEHDEKGEKSERP) shows a compositional bias: basic and acidic residues. Over residues 715 to 724 (HRPRHHKDHK) the composition is skewed to basic residues. Residues 725 to 737 (PKKEFTETPKDSE) show a composition bias toward basic and acidic residues.

The protein belongs to the polyribonucleotide nucleotidyltransferase family. Mg(2+) serves as cofactor.

Its subcellular location is the cytoplasm. The enzyme catalyses RNA(n+1) + phosphate = RNA(n) + a ribonucleoside 5'-diphosphate. Functionally, involved in mRNA degradation. Catalyzes the phosphorolysis of single-stranded polyribonucleotides processively in the 3'- to 5'-direction. The protein is Polyribonucleotide nucleotidyltransferase of Streptococcus pneumoniae (strain Taiwan19F-14).